The chain runs to 309 residues: Methionyl-tRNA formyltransferase (309 aa).

Residue 109-112 participates in (6S)-5,6,7,8-tetrahydrofolate binding; the sequence is SLLP.

Belongs to the Fmt family.

It catalyses the reaction L-methionyl-tRNA(fMet) + (6R)-10-formyltetrahydrofolate = N-formyl-L-methionyl-tRNA(fMet) + (6S)-5,6,7,8-tetrahydrofolate + H(+). In terms of biological role, attaches a formyl group to the free amino group of methionyl-tRNA(fMet). The formyl group appears to play a dual role in the initiator identity of N-formylmethionyl-tRNA by promoting its recognition by IF2 and preventing the misappropriation of this tRNA by the elongation apparatus. The polypeptide is Methionyl-tRNA formyltransferase (Chloroflexus aggregans (strain MD-66 / DSM 9485)).